Reading from the N-terminus, the 159-residue chain is Putative viral CXC chemokine 2 (159 aa).

Intrachain disulfides connect Cys50-Cys77 and Cys52-Cys93.

The protein belongs to the intercrine alpha (chemokine CxC) family.

In Human cytomegalovirus (strain Towne) (HHV-5), this protein is Putative viral CXC chemokine 2 (UL147).